A 435-amino-acid chain; its full sequence is MVVPNGEGDKTAAVVGLQFGDEGKGKITDYLSGSYDVVVRFNGGTNAGHTVVTDEGTFKFHLLPSGSLRTSYVVLGSGMVIDPVALIPEIEIVRKINPALKIIISRNAHVVTKMHRQIDVEEEKIRSSLMIGTTAQGIGPTYEDKYARTGIRMVDISDIDLIKEKIETMYRMHSNLLANTEFSNLAKREEMAKEIYEAGIKLTGYLDYTEVAIDRLYSQGKRILFEGAQGVFLDPDFGFYPFVTSSNTISASVYTGTGFSLRKVNRIIGVAKAYVSKVGEGPFPTEITGDLAKQLRDLGGEYGTTTGRPRRVGWLDLPMLKYAVRIDDVDEIAITKVDTLGMLDTVKVCRQYLIDGKPIDYVPRDMNTIKKIEPVYDEFEGWGAISDSISGRKISIDQLPSKLVKYIKYIEDQVGKPIGIISMGKERNRTVRIIK.

Residues 20–26 and 48–50 each bind GTP; these read GDEGKGK and GHT. Asp21 (proton acceptor) is an active-site residue. Positions 21 and 48 each coordinate Mg(2+). IMP-binding positions include 21 to 24, 46 to 49, Thr134, Arg148, Gln229, Thr244, and Arg308; these read DEGK and NAGH. The active-site Proton donor is His49. Position 304–310 (304–310) interacts with substrate; it reads TTTGRPR. Residues Arg310, 336-338, and 422-424 each bind GTP; these read KVD and SMG.

This sequence belongs to the adenylosuccinate synthetase family. In terms of assembly, homodimer. Mg(2+) is required as a cofactor.

Its subcellular location is the cytoplasm. It carries out the reaction IMP + L-aspartate + GTP = N(6)-(1,2-dicarboxyethyl)-AMP + GDP + phosphate + 2 H(+). It functions in the pathway purine metabolism; AMP biosynthesis via de novo pathway; AMP from IMP: step 1/2. Plays an important role in the de novo pathway of purine nucleotide biosynthesis. Catalyzes the first committed step in the biosynthesis of AMP from IMP. The chain is Adenylosuccinate synthetase from Thermoplasma acidophilum (strain ATCC 25905 / DSM 1728 / JCM 9062 / NBRC 15155 / AMRC-C165).